The chain runs to 92 residues: Large ribosomal subunit protein eL43 (92 aa).

The C4-type zinc-finger motif lies at C39–C60.

This sequence belongs to the eukaryotic ribosomal protein eL43 family.

The protein is Large ribosomal subunit protein eL43 (RPL37a) of Ostreococcus lucimarinus (strain CCE9901).